Consider the following 236-residue polypeptide: Mitochondrial coenzyme A diphosphatase NUDT8 (236 aa).

The Nudix hydrolase domain occupies 25–172; that stretch reads LRARPASAAV…HFRYTLPVFL (148 aa). The residue at position 70 (K70) is an N6-succinyllysine. The short motif at 70-91 is the Nudix box element; it reads KCDPADQDVVHTALRETREELG. Mg(2+) contacts are provided by E85 and E89.

It belongs to the Nudix hydrolase family. In terms of assembly, monomer. Requires Mg(2+) as cofactor. The cofactor is Mn(2+).

It localises to the mitochondrion. It carries out the reaction an acyl-CoA + H2O = an acyl-4'-phosphopantetheine + adenosine 3',5'-bisphosphate + 2 H(+). It catalyses the reaction CoA + H2O = (R)-4'-phosphopantetheine + adenosine 3',5'-bisphosphate + 2 H(+). The enzyme catalyses acetyl-CoA + H2O = S-acetyl-4'-phosphopantetheine + adenosine 3',5'-bisphosphate + 2 H(+). The catalysed reaction is butanoyl-CoA + H2O = S-butanoyl-4'-phosphopantetheine + adenosine 3',5'-bisphosphate + 2 H(+). It carries out the reaction hexanoyl-CoA + H2O = hexanoyl-4'-phosphopantetheine + adenosine 3',5'-bisphosphate + 2 H(+). It catalyses the reaction octanoyl-CoA + H2O = S-octanoyl-4'-phosphopantetheine + adenosine 3',5'-bisphosphate + 2 H(+). The enzyme catalyses propanoyl-CoA + H2O = propanoyl-4'-phosphopantetheine + adenosine 3',5'-bisphosphate + 2 H(+). The catalysed reaction is malonyl-CoA + H2O = malonyl-4'-phosphopantetheine + adenosine 3',5'-bisphosphate + 2 H(+). It carries out the reaction succinyl-CoA + H2O = succinyl-4'-phosphopantetheine + adenosine 3',5'-bisphosphate + 2 H(+). It catalyses the reaction a 5'-end CoA-ribonucleoside in mRNA + H2O = a 5'-end phospho-adenosine-phospho-ribonucleoside in mRNA + (R)-4'-phosphopantetheine + 2 H(+). Its function is as follows. Acyl-CoA diphosphatase that mediates the hydrolysis of a wide range of CoA and CoA esters yielding 3',5'-ADP and the corresponding 4'-phosphopantetheine derivative as products. Hydrolyzes short- and medium-chain acyl-CoAs, exhibiting the highest activity toward free CoA, hexanoyl-CoA, and octanoyl-CoA and the lowest activity against acetyl-CoA. Exhibits decapping activity towards dpCoA-capped RNAs in vitro. The sequence is that of Mitochondrial coenzyme A diphosphatase NUDT8 (NUDT8) from Homo sapiens (Human).